We begin with the raw amino-acid sequence, 72 residues long: MSKEELLEFPGVVTELLPNATFRVKLENEHEIIAHTAGKMRKNRIRVLAGDKVLVEMTPYDLTKGRITYRFK.

An S1-like domain is found at 1-72 (MSKEELLEFP…TKGRITYRFK (72 aa)).

The protein belongs to the IF-1 family. Component of the 30S ribosomal translation pre-initiation complex which assembles on the 30S ribosome in the order IF-2 and IF-3, IF-1 and N-formylmethionyl-tRNA(fMet); mRNA recruitment can occur at any time during PIC assembly.

The protein localises to the cytoplasm. Functionally, one of the essential components for the initiation of protein synthesis. Stabilizes the binding of IF-2 and IF-3 on the 30S subunit to which N-formylmethionyl-tRNA(fMet) subsequently binds. Helps modulate mRNA selection, yielding the 30S pre-initiation complex (PIC). Upon addition of the 50S ribosomal subunit IF-1, IF-2 and IF-3 are released leaving the mature 70S translation initiation complex. The chain is Translation initiation factor IF-1 from Parvibaculum lavamentivorans (strain DS-1 / DSM 13023 / NCIMB 13966).